Consider the following 42-residue polypeptide: Ostricacin-4 (42 aa).

Intrachain disulfides connect cysteine 8–cysteine 36, cysteine 15–cysteine 30, and cysteine 20–cysteine 37.

Its subcellular location is the secreted. In terms of biological role, has antibacterial activity against the Gram-positive bacterium S.aureus 1056 MRSA (MIC=11.48 ug/ml) and the Gram-negative bacterium E.coli O157:H7 (MIC=12.03 ug/ml). Does not have antifungal activity against the yeast C.albicans 3153A. This Struthio camelus (Common ostrich) protein is Ostricacin-4.